A 282-amino-acid chain; its full sequence is tRNA (guanine-N(7)-)-methyltransferase (282 aa).

The interval 1-31 (MSLTDDQASKRQAYRAAKEANRKELKHVKID) is disordered. Residues 16-31 (AAKEANRKELKHVKID) show a composition bias toward basic and acidic residues. S-adenosyl-L-methionine-binding positions include G99, 122-123 (EI), 157-158 (NA), and C177. D180 is an active-site residue. 255–257 (TEE) serves as a coordination point for S-adenosyl-L-methionine.

Belongs to the class I-like SAM-binding methyltransferase superfamily. TrmB family. Forms a complex with TRM82.

The protein localises to the nucleus. The catalysed reaction is guanosine(46) in tRNA + S-adenosyl-L-methionine = N(7)-methylguanosine(46) in tRNA + S-adenosyl-L-homocysteine. The protein operates within tRNA modification; N(7)-methylguanine-tRNA biosynthesis. Catalyzes the formation of N(7)-methylguanine at position 46 (m7G46) in tRNA. In Eremothecium gossypii (strain ATCC 10895 / CBS 109.51 / FGSC 9923 / NRRL Y-1056) (Yeast), this protein is tRNA (guanine-N(7)-)-methyltransferase.